The primary structure comprises 117 residues: Anti-adapter protein IraM (117 aa).

Belongs to the IraM/RssC family.

It is found in the cytoplasm. In terms of biological role, involved in the stabilization of the sigma stress factor RpoS. The polypeptide is Anti-adapter protein IraM (Klebsiella pneumoniae (strain 342)).